The sequence spans 416 residues: S-layer protein B (416 aa).

An N-terminal signal peptide occupies residues 1–20 (MKYNLLPLILLSLLVAPLLA). The stretch at 310-330 (IASLNSTIQSLESQISSLSST) forms a coiled coil. A helical membrane pass occupies residues 392–412 (IALAVSIIAIIISIVVLILVF).

Belongs to the Sulfolobales SlaB family. As to quaternary structure, the mushroom-shaped unit cells of the Sulfolobales' S-layers may consist of three SlaB subunits and six SlaA subunits.

The protein localises to the secreted. It is found in the cell wall. It localises to the S-layer. The protein resides in the cell membrane. Its function is as follows. S-layer small protein. May anchor the complex to the cell membrane. This is S-layer protein B from Metallosphaera sedula (strain ATCC 51363 / DSM 5348 / JCM 9185 / NBRC 15509 / TH2).